The chain runs to 277 residues: Putative hydro-lyase BPP3031 (277 aa).

This sequence belongs to the D-glutamate cyclase family.

The chain is Putative hydro-lyase BPP3031 from Bordetella parapertussis (strain 12822 / ATCC BAA-587 / NCTC 13253).